We begin with the raw amino-acid sequence, 218 residues long: Small ribosomal subunit protein uS3c (218 aa).

A KH type-2 domain is found at 47–118 (VQKNMKTSSG…KLNIAITRIE (72 aa)).

It belongs to the universal ribosomal protein uS3 family. As to quaternary structure, part of the 30S ribosomal subunit.

The protein resides in the plastid. Its subcellular location is the chloroplast. In Helianthus annuus (Common sunflower), this protein is Small ribosomal subunit protein uS3c (rps3).